The following is a 216-amino-acid chain: Sperm microtubule inner protein 8 (216 aa).

As to quaternary structure, microtubule inner protein component of sperm flagellar doublet microtubules. In terms of tissue distribution, expressed in testis.

The protein localises to the cytoplasm. It localises to the cytoskeleton. It is found in the flagellum axoneme. In terms of biological role, microtubule inner protein (MIP) part of the dynein-decorated doublet microtubules (DMTs) in flagellum axoneme. May serve to reinforce and thus stabilize the microtubule structure in the sperm flagella. This chain is Sperm microtubule inner protein 8 (Spmip8), found in Mus musculus (Mouse).